The sequence spans 94 residues: Protein RESPONSE TO LOW SULFUR 2 (94 aa).

Positions 15-63 (VDELRRKNGEMEKAVEEMKKEMLQLWRRTQVAEEAEERLCSQLAELEAE) form a coiled coil.

May be involved in defense responses monitoring. Probably implicated into osmotic stress signaling. The polypeptide is Protein RESPONSE TO LOW SULFUR 2 (Arabidopsis thaliana (Mouse-ear cress)).